Here is a 437-residue protein sequence, read N- to C-terminus: GTPase Der (437 aa).

EngA-type G domains lie at 4–167 and 176–351; these read PVIA…PEDE and IRIS…ENHN. GTP is bound by residues 10–17, 57–61, 119–122, 182–189, 229–233, and 294–297; these read GRPNVGKS, DTGGI, NKID, DTAGM, and NKWD. In terms of domain architecture, KH-like spans 352 to 436; that stretch reads LRVPTHVLND…PIKIIARKKN (85 aa).

This sequence belongs to the TRAFAC class TrmE-Era-EngA-EngB-Septin-like GTPase superfamily. EngA (Der) GTPase family. Associates with the 50S ribosomal subunit.

Its function is as follows. GTPase that plays an essential role in the late steps of ribosome biogenesis. The polypeptide is GTPase Der (Halalkalibacterium halodurans (strain ATCC BAA-125 / DSM 18197 / FERM 7344 / JCM 9153 / C-125) (Bacillus halodurans)).